Consider the following 119-residue polypeptide: FAD-linked sulfhydryl oxidase (119 aa).

In terms of domain architecture, ERV/ALR sulfhydryl oxidase spans 1 to 97 (MLHWGPKFWR…ISWSEYKNIY (97 aa)). An intrachain disulfide couples Cys44 to Cys47.

The protein belongs to the asfivirus B119L family. In terms of assembly, interacts with A151R. It depends on FAD as a cofactor.

The protein localises to the host cytoplasm. Its subcellular location is the virion. It carries out the reaction 2 R'C(R)SH + O2 = R'C(R)S-S(R)CR' + H2O2. Functionally, FAD-dependent sulfhydryl oxidase that catalyzes the formation of disulfide bonds in viral proteins produced in the cell cytoplasm. Involved in virion maturation. This Ornithodoros (relapsing fever ticks) protein is FAD-linked sulfhydryl oxidase.